We begin with the raw amino-acid sequence, 109 residues long: Nucleoid-associated protein VC_1055 (109 aa).

The segment at 1-22 (MFGKGGMGNLMKQAQQMQERMQ) is disordered.

This sequence belongs to the YbaB/EbfC family. Homodimer.

It is found in the cytoplasm. Its subcellular location is the nucleoid. In terms of biological role, binds to DNA and alters its conformation. May be involved in regulation of gene expression, nucleoid organization and DNA protection. In Vibrio cholerae serotype O1 (strain ATCC 39315 / El Tor Inaba N16961), this protein is Nucleoid-associated protein VC_1055.